The chain runs to 317 residues: Cytochrome f (317 aa).

The first 34 residues, 1-34, serve as a signal peptide directing secretion; the sequence is MKGLKNQIMKKTSLFICTLLFILSIVFYPKITFA. Residues Tyr-35, Cys-55, Cys-58, and His-59 each coordinate heme. Residues 284-304 traverse the membrane as a helical segment; sequence VIGLIAFFIGVGLTQILLVLK.

This sequence belongs to the cytochrome f family. The 4 large subunits of the cytochrome b6-f complex are cytochrome b6, subunit IV (17 kDa polypeptide, PetD), cytochrome f and the Rieske protein, while the 4 small subunits are PetG, PetL, PetM and PetN. The complex functions as a dimer. It depends on heme as a cofactor.

The protein localises to the cellular thylakoid membrane. In terms of biological role, component of the cytochrome b6-f complex, which mediates electron transfer between photosystem II (PSII) and photosystem I (PSI), cyclic electron flow around PSI, and state transitions. The protein is Cytochrome f of Prochlorococcus marinus (strain MIT 9215).